The following is a 516-amino-acid chain: uncharacterized protein (516 aa).

A run of 5 helical transmembrane segments spans residues 10–27 (IRYPELALFLVIAAGYWI), 32–54 (IGAFSLGPVTGALFAGLVVGDFA), 64–83 (SFLFLLFLFGVGYSVGPQFV), 95–117 (LLAVVVCLTGLAAAIAVGRILGL), and 165–187 (AVCYIFGYAGVIMWCTVVAPALL). 2 RCK C-terminal domains span residues 208–291 (KPGL…SRAE) and 296–376 (RELL…NIGV). The next 4 helical transmembrane spans lie at 386 to 408 (FVVLGLAIFFGGVVGVLVSFPVG), 412 to 430 (IALSTSVGTLLAGLLVGHL), 443 to 465 (GAISLMTSLGLAAFVGLTGIHAG), and 480 to 502 (LLGGMVVTLLPQIVGFCFGHFVL).

This sequence belongs to the AAE transporter (TC 2.A.81) family.

It localises to the cell membrane. This is an uncharacterized protein from Bradyrhizobium diazoefficiens (strain JCM 10833 / BCRC 13528 / IAM 13628 / NBRC 14792 / USDA 110).